Consider the following 370-residue polypeptide: Putative methylthioribose-1-phosphate isomerase (370 aa).

Substrate-binding positions include 66-68 (RGA), Arg-109, and Gln-217. Catalysis depends on Asp-258, which acts as the Proton donor. Position 268–269 (268–269 (NK)) interacts with substrate.

Belongs to the eIF-2B alpha/beta/delta subunits family. MtnA subfamily.

The catalysed reaction is 5-(methylsulfanyl)-alpha-D-ribose 1-phosphate = 5-(methylsulfanyl)-D-ribulose 1-phosphate. Catalyzes the interconversion of methylthioribose-1-phosphate (MTR-1-P) into methylthioribulose-1-phosphate (MTRu-1-P). In Aeropyrum pernix (strain ATCC 700893 / DSM 11879 / JCM 9820 / NBRC 100138 / K1), this protein is Putative methylthioribose-1-phosphate isomerase.